A 126-amino-acid chain; its full sequence is Aspartate 1-decarboxylase (126 aa).

The active-site Schiff-base intermediate with substrate; via pyruvic acid is the Ser25. Position 25 is a pyruvic acid (Ser) (Ser25). Position 57 (Thr57) interacts with substrate. The active-site Proton donor is the Tyr58. 73–75 serves as a coordination point for substrate; it reads GAA.

This sequence belongs to the PanD family. As to quaternary structure, heterooctamer of four alpha and four beta subunits. Requires pyruvate as cofactor. Post-translationally, is synthesized initially as an inactive proenzyme, which is activated by self-cleavage at a specific serine bond to produce a beta-subunit with a hydroxyl group at its C-terminus and an alpha-subunit with a pyruvoyl group at its N-terminus.

The protein resides in the cytoplasm. It catalyses the reaction L-aspartate + H(+) = beta-alanine + CO2. It participates in cofactor biosynthesis; (R)-pantothenate biosynthesis; beta-alanine from L-aspartate: step 1/1. Functionally, catalyzes the pyruvoyl-dependent decarboxylation of aspartate to produce beta-alanine. The chain is Aspartate 1-decarboxylase from Psychromonas ingrahamii (strain DSM 17664 / CCUG 51855 / 37).